A 344-amino-acid chain; its full sequence is MAAAKTILRSLAGETLPTPPIWMMRQAGRYLPEYKATRAQAGDFLSLCYNPELAAEVTLQPIRRYGFDAAILFADILLLPQALGADLWFVTGEGPRLSTITTQADFDKLKPVDEIDAVLNPIYETVRILRRELPQETTLIGFAGAPWTVATYMIAGRGTPDQAPAHALKDENRELFEALLARITQGTIEYLSRQIEAGAEVVKIFDSWAGSLKGADFQRYALEPAREITAAIKARHPDIPVIGFPREAGDGYIGFAKATGVDCVALDNSVSAEWAAANVQVDGCVQGNLASSHMVTGGQALIDETRAIVKAFSGGPHIFNLGHGITPDADPDNVQRMIDAVRGQ.

Residues 25–29 (RQAGR), Asp75, Tyr152, Ser207, and His323 contribute to the substrate site.

This sequence belongs to the uroporphyrinogen decarboxylase family. As to quaternary structure, homodimer.

It is found in the cytoplasm. The enzyme catalyses uroporphyrinogen III + 4 H(+) = coproporphyrinogen III + 4 CO2. It functions in the pathway porphyrin-containing compound metabolism; protoporphyrin-IX biosynthesis; coproporphyrinogen-III from 5-aminolevulinate: step 4/4. In terms of biological role, catalyzes the decarboxylation of four acetate groups of uroporphyrinogen-III to yield coproporphyrinogen-III. The polypeptide is Uroporphyrinogen decarboxylase (Roseobacter denitrificans (strain ATCC 33942 / OCh 114) (Erythrobacter sp. (strain OCh 114))).